The sequence spans 260 residues: tRNA pseudouridine synthase A (260 aa).

Aspartate 52 functions as the Nucleophile in the catalytic mechanism. Tyrosine 111 serves as a coordination point for substrate.

Belongs to the tRNA pseudouridine synthase TruA family. As to quaternary structure, homodimer.

It carries out the reaction uridine(38/39/40) in tRNA = pseudouridine(38/39/40) in tRNA. Functionally, formation of pseudouridine at positions 38, 39 and 40 in the anticodon stem and loop of transfer RNAs. The polypeptide is tRNA pseudouridine synthase A (Beijerinckia indica subsp. indica (strain ATCC 9039 / DSM 1715 / NCIMB 8712)).